Reading from the N-terminus, the 125-residue chain is MRHYEIVFMVHPDQSEQVPGMIERYTGSVKEAGGQIHRLEDWGRRQLAYPINKLHKAHYVLMNVEAPQEVIDELETTFRYNDAVLRNVIIRTKHAVTEASPMVKAREERKPLTEVENNDFEDAEE.

Positions 99–125 (ASPMVKAREERKPLTEVENNDFEDAEE) are disordered. Basic and acidic residues predominate over residues 104-113 (KAREERKPLT). Residues 116–125 (ENNDFEDAEE) show a composition bias toward acidic residues.

It belongs to the bacterial ribosomal protein bS6 family.

Binds together with bS18 to 16S ribosomal RNA. This Histophilus somni (strain 2336) (Haemophilus somnus) protein is Small ribosomal subunit protein bS6.